Reading from the N-terminus, the 543-residue chain is Sodium/glucose cotransporter (543 aa).

14 helical membrane passes run 10-30, 45-65, 79-99, 129-149, 156-176, 193-213, 246-266, 287-307, 345-365, 401-421, 427-447, 455-475, 483-503, and 523-543; these read FIDI…GLWV, FLAG…AANI, SIGL…IIVG, ILAV…VLYL, TILG…ALVY, VFFL…FIGG, LPGI…YWGF, IVFA…PGIA, FLPV…IVSS, TAAV…GGIG, IQEY…LGLF, GAII…FMPL, MLYT…STSI, and SFNI…TLFW.

It is found in the cell membrane. Functionally, actively transports glucose into cells by Na(+) cotransport. The chain is Sodium/glucose cotransporter (sglT) from Vibrio parahaemolyticus.